A 68-amino-acid polypeptide reads, in one-letter code: Protein transport protein Sec61 gamma-1 subunit (68 aa).

Residues 1 to 32 (MDKVVKFAEPGRAFAKDSIRLVKRCTKPDRKE) are Cytoplasmic-facing. The chain crosses the membrane as a helical span at residues 33-61 (FQKIAIATAVGFAIMGFIGFFVKLIHIPI). Residues 62-68 (NNIIVGS) lie on the Extracellular side of the membrane.

The protein belongs to the SecE/SEC61-gamma family. In terms of assembly, heterotrimeric complex composed of SEC61-alpha, SEC61-beta and SEC61-gamma.

Its subcellular location is the endoplasmic reticulum membrane. Necessary for protein translocation in the endoplasmic reticulum. This is Protein transport protein Sec61 gamma-1 subunit (SEC61G1) from Drosophila melanogaster (Fruit fly).